A 160-amino-acid chain; its full sequence is 6,7-dimethyl-8-ribityllumazine synthase (160 aa).

Residues Trp27, 59–61, and 81–83 contribute to the 5-amino-6-(D-ribitylamino)uracil site; these read AIE and VVI. Position 86–87 (86–87) interacts with (2S)-2-hydroxy-3-oxobutyl phosphate; sequence QT. Residue His89 is the Proton donor of the active site. 5-amino-6-(D-ribitylamino)uracil is bound at residue Asn114. Arg128 provides a ligand contact to (2S)-2-hydroxy-3-oxobutyl phosphate.

Belongs to the DMRL synthase family. As to quaternary structure, homopentamer.

It catalyses the reaction (2S)-2-hydroxy-3-oxobutyl phosphate + 5-amino-6-(D-ribitylamino)uracil = 6,7-dimethyl-8-(1-D-ribityl)lumazine + phosphate + 2 H2O + H(+). It functions in the pathway cofactor biosynthesis; riboflavin biosynthesis; riboflavin from 2-hydroxy-3-oxobutyl phosphate and 5-amino-6-(D-ribitylamino)uracil: step 1/2. Catalyzes the formation of 6,7-dimethyl-8-ribityllumazine by condensation of 5-amino-6-(D-ribitylamino)uracil with 3,4-dihydroxy-2-butanone 4-phosphate. This is the penultimate step in the biosynthesis of riboflavin. This Mycobacterium sp. (strain JLS) protein is 6,7-dimethyl-8-ribityllumazine synthase.